Consider the following 464-residue polypeptide: Na(+)/H(+) antiporter NhaA 1 (464 aa).

11 helical membrane passes run 41 to 61 (GGLI…SPLA), 85 to 105 (LHHW…GLEL), 121 to 141 (VLPI…YMSL), 150 to 170 (GWGI…ALLA), 180 to 200 (FLVA…AVFY), 207 to 227 (SFLI…MIGI), 234 to 254 (FFVG…ATLA), 329 to 349 (VAFF…IDFG), 363 to 383 (VVFG…WLAI), 399 to 419 (IIGA…IAEL), and 428 to 448 (IIQA…AGYL).

The protein belongs to the NhaA Na(+)/H(+) (TC 2.A.33) antiporter family.

The protein localises to the cell inner membrane. The enzyme catalyses Na(+)(in) + 2 H(+)(out) = Na(+)(out) + 2 H(+)(in). Its function is as follows. Na(+)/H(+) antiporter that extrudes sodium in exchange for external protons. The sequence is that of Na(+)/H(+) antiporter NhaA 1 from Saccharophagus degradans (strain 2-40 / ATCC 43961 / DSM 17024).